The chain runs to 304 residues: dTDP-4-dehydrorhamnose reductase (304 aa).

NADH contacts are provided by residues 16 to 18 (GML), 42 to 43 (DI), and 66 to 68 (AWT). Residues 17-18 (ML), 42-43 (DI), and 66-68 (AWT) each bind NADPH. A dTDP-beta-L-rhamnose-binding site is contributed by 107 to 108 (TD). 2 residues coordinate NADH: Tyr-131 and Lys-135. The NADPH site is built by Tyr-131 and Lys-135. The active-site Proton donor/acceptor is the Tyr-131. Position 157 (Trp-157) interacts with dTDP-beta-L-rhamnose.

The protein belongs to the dTDP-4-dehydrorhamnose reductase family. As to quaternary structure, homodimer. Mg(2+) is required as a cofactor.

It carries out the reaction dTDP-beta-L-rhamnose + NADP(+) = dTDP-4-dehydro-beta-L-rhamnose + NADPH + H(+). It functions in the pathway carbohydrate biosynthesis; dTDP-L-rhamnose biosynthesis. It participates in antibiotic biosynthesis; streptomycin biosynthesis. Its function is as follows. Involved in the biosynthesis of the streptose moiety of streptomycin. Catalyzes the reduction of dTDP-6-deoxy-L-lyxo-4-hexulose to yield dTDP-L-rhamnose. RmlD uses NADH and NADPH nearly equally well. This Streptomyces griseus protein is dTDP-4-dehydrorhamnose reductase.